Here is a 532-residue protein sequence, read N- to C-terminus: Membrane protein insertase YidC (532 aa).

6 consecutive transmembrane segments (helical) span residues 6–26 (IVLAIILSLVVFLGWHSFAEY), 317–337 (AIDFGMFSIIAKPLLTALTFF), 342–362 (GNWGVAIIVLTLCIKIVFWPL), 411–431 (GGCLPILLQIPVFIGLYQALL), 451–473 (VWLADLSAADPFYITPLLMGASM), and 496–516 (PIIFTVMFLNFPAGLVIYWLF).

This sequence belongs to the OXA1/ALB3/YidC family. Type 1 subfamily. Interacts with the Sec translocase complex via SecD. Specifically interacts with transmembrane segments of nascent integral membrane proteins during membrane integration.

It is found in the cell membrane. In terms of biological role, required for the insertion and/or proper folding and/or complex formation of integral membrane proteins into the membrane. Involved in integration of membrane proteins that insert both dependently and independently of the Sec translocase complex, as well as at least some lipoproteins. Aids folding of multispanning membrane proteins. The chain is Membrane protein insertase YidC from Lawsonia intracellularis (strain PHE/MN1-00).